Consider the following 670-residue polypeptide: Transcriptional regulatory protein DOT6 (670 aa).

Polar residues predominate over residues 1 to 44 (MSISTSLNSASIHLSSMDTHPQLHSLTRQPHSSSTAMSKNEAQE). The interval 1–78 (MSISTSLNSA…SKNPSSWDPQ (78 aa)) is disordered. The span at 45-74 (SSPSLPASSSSSTSASASASSKNSSKNPSS) shows a compositional bias: low complexity. An HTH myb-type domain is found at 67–121 (NSSKNPSSWDPQDDLLLRHLKEVKKMGWKDISQYFPNRTPNACQFRWRRLKSGNL). The H-T-H motif DNA-binding region spans 94–117 (WKDISQYFPNRTPNACQFRWRRLK). The span at 226–242 (HHPHQHLHHHPHHKTLK) shows a compositional bias: basic residues. 4 disordered regions span residues 226-250 (HHPH…SHSF), 293-332 (TTPS…NTSR), 406-436 (HSSS…CNPT), and 483-659 (ADML…NSPL). A phosphoserine mark is found at S245 and S247. Composition is skewed to low complexity over residues 295–307 (PSSP…LLSS) and 316–332 (NWSR…NTSR). Polar residues predominate over residues 425–436 (SGHSMKSSCNPT). A Phosphoserine modification is found at S487. The residue at position 489 (T489) is a Phosphothreonine. S491 carries the phosphoserine modification. Residues 512-522 (DDDKGSDKEDV) show a composition bias toward basic and acidic residues. Composition is skewed to low complexity over residues 544-561 (SSNK…SSKD) and 587-598 (TITSDTSSSAAT). Residues 599–608 (MNRTPNSKNP) are compositionally biased toward polar residues. Over residues 622 to 659 (ITPRPKPSSTTTSITTETTNNMINHSSSTTTTTNNSPL) the composition is skewed to low complexity.

It belongs to the DOT6 family. As to quaternary structure, component of the RPD3C(L) complex composed of at least ASH1, CTI6, DEP1, DOT6, PHO23, RPD3, RXT2, RXT3, SAP30, SDS3, SIN3, TOD6; UME1 and UME6.

The protein resides in the nucleus. Its function is as follows. Component of the RPD3 histone deacetylase complex RPD3C(L) responsible for the deacetylation of lysine residues on the N-terminal part of the core histones (H2A, H2B, H3 and H4). Histone deacetylation gives a tag for epigenetic repression and plays an important role in transcriptional regulation, cell cycle progression and developmental events. DOT6 binds to sequences containing the core CGATG, which resembles the PAC (Polymerase A and C) motif. The protein is Transcriptional regulatory protein DOT6 (DOT6) of Saccharomyces cerevisiae (strain ATCC 204508 / S288c) (Baker's yeast).